A 443-amino-acid polypeptide reads, in one-letter code: Xaa-Pro dipeptidase (443 aa).

Residues Asp-246, Asp-257, His-339, Glu-384, and Glu-423 each contribute to the Mn(2+) site.

The protein belongs to the peptidase M24B family. Bacterial-type prolidase subfamily. Requires Mn(2+) as cofactor.

It carries out the reaction Xaa-L-Pro dipeptide + H2O = an L-alpha-amino acid + L-proline. In terms of biological role, splits dipeptides with a prolyl residue in the C-terminal position. The protein is Xaa-Pro dipeptidase of Salmonella arizonae (strain ATCC BAA-731 / CDC346-86 / RSK2980).